We begin with the raw amino-acid sequence, 573 residues long: Putative cytochrome c oxidase subunit 1-beta (573 aa).

A helical membrane pass occupies residues 53 to 73; that stretch reads VIGHLYLATSFGFFLLGGVLA. Residue His100 participates in Fe(II)-heme a binding. Transmembrane regions (helical) follow at residues 103 to 123, 141 to 161, 188 to 208, 227 to 247, 272 to 292, and 304 to 324; these read IMML…IMPL, WMYL…GGAA, GLVV…STII, ILFT…ALLM, LFWF…FGIV, and IFGY…SAVV. 2 residues coordinate Cu cation: His278 and Tyr282. Positions 278–282 form a cross-link, 1'-histidyl-3'-tyrosine (His-Tyr); that stretch reads HPEVY. Cu cation contacts are provided by His327 and His328. The next 2 membrane-spanning stretches (helical) occupy residues 329 to 349 and 373 to 393; these read MFAT…LIAV and MLWA…GVLI. His411 lines the heme a3 pocket. 3 helical membrane passes run 412-432, 447-467, and 490-510; these read LHYV…YFWW, IHFW…HWLG, and ISSI…YNVW. His413 contributes to the Fe(II)-heme a binding site.

The protein belongs to the heme-copper respiratory oxidase family. As to quaternary structure, associates with subunits II, III and IV to form cytochrome c oxidase. It depends on Cu(2+) as a cofactor. Heme serves as cofactor.

It localises to the cell membrane. It carries out the reaction 4 Fe(II)-[cytochrome c] + O2 + 8 H(+)(in) = 4 Fe(III)-[cytochrome c] + 2 H2O + 4 H(+)(out). Its pathway is energy metabolism; oxidative phosphorylation. In terms of biological role, cytochrome c oxidase is the component of the respiratory chain that catalyzes the reduction of oxygen to water. Subunits 1-3 form the functional core of the enzyme complex. CO I is the catalytic subunit of the enzyme. Electrons originating in cytochrome c are transferred via the copper A center of subunit 2 and heme A of subunit 1 to the bimetallic center formed by heme A3 and copper B. The chain is Putative cytochrome c oxidase subunit 1-beta (ctaD2) from Streptomyces coelicolor (strain ATCC BAA-471 / A3(2) / M145).